We begin with the raw amino-acid sequence, 972 residues long: Mast/stem cell growth factor receptor Kit (972 aa).

Positions Met-1–Ser-25 are cleaved as a signal peptide. Topologically, residues Gln-26 to Pro-520 are extracellular. 5 consecutive Ig-like C2-type domains span residues Pro-27–Arg-112, Asp-121–Arg-205, Pro-212–Val-308, Pro-317–Asn-410, and Pro-413–Ala-507. 4 disulfides stabilise this stretch: Cys-58–Cys-97, Cys-136–Cys-186, Cys-151–Cys-183, and Cys-233–Cys-290. 2 N-linked (GlcNAc...) asparagine glycosylation sites follow: Asn-94 and Asn-145. Asn-283, Asn-293, Asn-300, Asn-320, Asn-352, Asn-367, Asn-400, Asn-463, and Asn-486 each carry an N-linked (GlcNAc...) asparagine glycan. Cys-428 and Cys-491 are disulfide-bonded. The chain crosses the membrane as a helical span at residues Leu-521–Tyr-541. Residues Lys-542–Val-972 lie on the Cytoplasmic side of the membrane. Phosphotyrosine; by autocatalysis occurs at positions 543, 549, 564, and 566. Tyr-564 is a Mg(2+) binding site. The important for interaction with phosphotyrosine-binding proteins stretch occupies residues Tyr-564–Tyr-566. A Protein kinase domain is found at Leu-585 to Ser-933. Residues Gly-592–Val-599, Lys-619, and Glu-667–Asp-673 contribute to the ATP site. Residues Tyr-699, Tyr-717, and Tyr-726 each carry the phosphotyrosine; by autocatalysis modification. 2 positions are modified to phosphoserine; by PKC/PRKCA: Ser-737 and Ser-742. Residue Asp-788 is the Proton acceptor of the active site. Arg-792 contributes to the ATP binding site. Mg(2+) is bound by residues Asn-793 and Asp-806. Residue Ser-817 is modified to Phosphoserine. Tyr-819 bears the Phosphotyrosine; by autocatalysis mark. Ser-887 is modified (phosphoserine). Residues Tyr-896 and Tyr-932 each carry the phosphotyrosine; by autocatalysis modification. At Ser-955 the chain carries Phosphoserine.

It belongs to the protein kinase superfamily. Tyr protein kinase family. CSF-1/PDGF receptor subfamily. In terms of assembly, monomer in the absence of bound KITLG/SCF. Homodimer in the presence of bound KITLG/SCF, forming a heterotetramer with two KITLG/SCF molecules. Interacts (via phosphorylated tyrosine residues) with the adapter proteins GRB2 and GRB7 (via SH2 domain), and SH2B2/APS. Interacts (via C-terminus) with MPDZ (via the tenth PDZ domain). Interacts (via phosphorylated tyrosine residues) with PIK3R1 and PIK3 catalytic subunit. Interacts (via phosphorylated tyrosine) with CRK (isoform Crk-II), FYN, SHC1 and MATK/CHK (via SH2 domain). Interacts with LYN and FES/FPS. Interacts (via phosphorylated tyrosine residues) with the protein phosphatases PTPN6/SHP-1 (via SH2 domain), PTPN11/SHP-2 (via SH2 domain) and PTPRU. Interacts with PLCG1. Interacts with DOK1 and TEC. Interacts with IL1RAP (independent of stimulation with KITLG/SCF). A mast cell-specific KITLG/SCF-induced interleukin-33 signaling complex contains IL1RL1, IL1RAP, KIT and MYD88. Post-translationally, ubiquitinated by SOCS6. KIT is rapidly ubiquitinated after autophosphorylation induced by KITLG/SCF binding, leading to internalization and degradation. In terms of processing, autophosphorylated on tyrosine residues. KITLG/SCF binding promotes autophosphorylation. Phosphorylated tyrosine residues are important for interaction with specific binding partners.

It is found in the cell membrane. The enzyme catalyses L-tyrosyl-[protein] + ATP = O-phospho-L-tyrosyl-[protein] + ADP + H(+). With respect to regulation, present in an inactive conformation in the absence of bound ligand. KITLG/SCF binding leads to dimerization and activation by autophosphorylation on tyrosine residues. Activity is down-regulated by PRKCA-mediated phosphorylation on serine residues. Functionally, tyrosine-protein kinase that acts as a cell-surface receptor for the cytokine KITLG/SCF and plays an essential role in the regulation of cell survival and proliferation, hematopoiesis, stem cell maintenance, gametogenesis, mast cell development, migration and function, and in melanogenesis. In response to KITLG/SCF binding, KIT can activate several signaling pathways. Phosphorylates PIK3R1, PLCG1, SH2B2/APS and CBL. Activates the AKT1 signaling pathway by phosphorylation of PIK3R1, the regulatory subunit of phosphatidylinositol 3-kinase. Activated KIT also transmits signals via GRB2 and activation of RAS, RAF1 and the MAP kinases MAPK1/ERK2 and/or MAPK3/ERK1. Promotes activation of STAT family members STAT1, STAT3, STAT5A and STAT5B. Activation of PLCG1 leads to the production of the cellular signaling molecules diacylglycerol and inositol 1,4,5-trisphosphate. KIT signaling is modulated by protein phosphatases, and by rapid internalization and degradation of the receptor. Activated KIT promotes phosphorylation of the protein phosphatases PTPN6/SHP-1 and PTPRU, and of the transcription factors STAT1, STAT3, STAT5A and STAT5B. Promotes phosphorylation of PIK3R1, CBL, CRK (isoform Crk-II), LYN, MAPK1/ERK2 and/or MAPK3/ERK1, PLCG1, SRC and SHC1. The chain is Mast/stem cell growth factor receptor Kit (KIT) from Sus scrofa (Pig).